A 206-amino-acid chain; its full sequence is High frequency lysogenization protein HflD homolog (206 aa).

The protein belongs to the HflD family.

The protein localises to the cytoplasm. It localises to the cell inner membrane. The protein is High frequency lysogenization protein HflD homolog of Pseudomonas aeruginosa (strain LESB58).